The chain runs to 293 residues: Pantothenate synthetase (293 aa).

An ATP-binding site is contributed by 38 to 45 (MGALHEGH). Catalysis depends on H45, which acts as the Proton donor. Position 69 (Q69) interacts with (R)-pantoate. Q69 contributes to the beta-alanine binding site. 155–158 (GEKD) is a binding site for ATP. Q161 is a binding site for (R)-pantoate. 192–195 (QSSR) contributes to the ATP binding site.

It belongs to the pantothenate synthetase family. Homodimer.

It localises to the cytoplasm. The catalysed reaction is (R)-pantoate + beta-alanine + ATP = (R)-pantothenate + AMP + diphosphate + H(+). Its pathway is cofactor biosynthesis; (R)-pantothenate biosynthesis; (R)-pantothenate from (R)-pantoate and beta-alanine: step 1/1. Its function is as follows. Catalyzes the condensation of pantoate with beta-alanine in an ATP-dependent reaction via a pantoyl-adenylate intermediate. This is Pantothenate synthetase from Hyphomonas neptunium (strain ATCC 15444).